A 367-amino-acid chain; its full sequence is Germination protease (367 aa).

The propeptide occupies 1-15 (MKEPLDLSKYSIRTD).

Belongs to the peptidase A25 family. In terms of assembly, homotetramer. Post-translationally, autoproteolytically processed. The inactive tetrameric zymogen termed p46 autoprocesses to a smaller form termed p41, which is active only during spore germination.

It carries out the reaction Endopeptidase action with P4 Glu or Asp, P1 preferably Glu &gt; Asp, P1' hydrophobic and P2' Ala.. In terms of biological role, initiates the rapid degradation of small, acid-soluble proteins during spore germination. In Bacillus cereus (strain ATCC 14579 / DSM 31 / CCUG 7414 / JCM 2152 / NBRC 15305 / NCIMB 9373 / NCTC 2599 / NRRL B-3711), this protein is Germination protease.